Here is a 95-residue protein sequence, read N- to C-terminus: Large ribosomal subunit protein bL25 (95 aa).

It belongs to the bacterial ribosomal protein bL25 family. In terms of assembly, part of the 50S ribosomal subunit; part of the 5S rRNA/L5/L18/L25 subcomplex. Contacts the 5S rRNA. Binds to the 5S rRNA independently of L5 and L18.

This is one of the proteins that binds to the 5S RNA in the ribosome where it forms part of the central protuberance. The chain is Large ribosomal subunit protein bL25 from Haemophilus influenzae (strain 86-028NP).